Here is a 495-residue protein sequence, read N- to C-terminus: Non-structural protein 1 (495 aa).

Positions 1–81 (MATFKDACFH…CFLDNEPHLL (81 aa)) are RNA-binding. The zinc-binding domain stretch occupies residues 42–79 (CLECCQIADLTHCYGCSLPHVCKWCVQNRRCFLDNEPH). The important for cytoskeleton localization stretch occupies residues 82 to 177 (KLQQLKHPIT…DIYAPYRIVN (96 aa)). Positions 320-495 (DIQYCKWCNI…LISNSEDDNE (176 aa)) are interaction with host IRF3. A pLxIS motif motif is present at residues 485–488 (LLIS).

It belongs to the rotavirus NSP1 family. Interacts (via C-terminus) with host IRF3; this interaction leads to IRF3 degradation. Interacts with host IRF7; this interaction leads to IRF7 degradation. Interacts with host CUL1 and CUL3.

It localises to the host cytoplasm. The protein localises to the host cytoskeleton. Functionally, plays a role in the inhibition of host innate immunity by inducing the degradation of key host factors required to activate interferon production such as IRF3, IRF5 or IRF7. Associates with components of cullin RING ligases (CRLs) including CUL1 or CUL3, which are essential multisubunit ubiquitination complexes, to modulate their activities. In Macaca mulatta (Rhesus macaque), this protein is Non-structural protein 1.